The following is a 132-amino-acid chain: DNA-directed RNA polymerase subunit omega (132 aa).

The disordered stretch occupies residues 100 to 119 (VSAEEEASHGTAGMSAEELE).

It belongs to the RNA polymerase subunit omega family. The RNAP catalytic core consists of 2 alpha, 1 beta, 1 beta' and 1 omega subunit. When a sigma factor is associated with the core the holoenzyme is formed, which can initiate transcription.

It catalyses the reaction RNA(n) + a ribonucleoside 5'-triphosphate = RNA(n+1) + diphosphate. In terms of biological role, promotes RNA polymerase assembly. Latches the N- and C-terminal regions of the beta' subunit thereby facilitating its interaction with the beta and alpha subunits. In Gluconacetobacter diazotrophicus (strain ATCC 49037 / DSM 5601 / CCUG 37298 / CIP 103539 / LMG 7603 / PAl5), this protein is DNA-directed RNA polymerase subunit omega.